We begin with the raw amino-acid sequence, 354 residues long: Chorismate synthase (354 aa).

Arg48 contributes to the NADP(+) binding site. FMN is bound by residues Arg125–Ser127, Ala280, Lys295–Ser299, and Arg321.

The protein belongs to the chorismate synthase family. As to quaternary structure, homotetramer. FMNH2 serves as cofactor.

It catalyses the reaction 5-O-(1-carboxyvinyl)-3-phosphoshikimate = chorismate + phosphate. It functions in the pathway metabolic intermediate biosynthesis; chorismate biosynthesis; chorismate from D-erythrose 4-phosphate and phosphoenolpyruvate: step 7/7. Catalyzes the anti-1,4-elimination of the C-3 phosphate and the C-6 proR hydrogen from 5-enolpyruvylshikimate-3-phosphate (EPSP) to yield chorismate, which is the branch point compound that serves as the starting substrate for the three terminal pathways of aromatic amino acid biosynthesis. This reaction introduces a second double bond into the aromatic ring system. The polypeptide is Chorismate synthase (Syntrophus aciditrophicus (strain SB)).